The primary structure comprises 74 residues: Tau-AnmTx Ueq 12-1 (74 aa).

The signal sequence occupies residues 1–18 (MCLLMLVLGAMYVQGWHS). A propeptide spans 19-27 (AGFGKRTLK) (removed in mature form). 5 cysteine pairs are disulfide-bonded: C30–C37, C40–C71, C46–C64, C51–C72, and C58–C73.

The protein belongs to the Cnidaria small cysteine-rich protein (SCRiP) family. Detected in mucus secreted from ectoderm.

The protein resides in the secreted. Potentiates activation of mammalian TRPA1, a non-selective cation channel involved in perception of pain, in vitro yet has an analgesic and anti-inflammatory effect in vivo. Has antibacterial activity against C.glutamicum (MIC=50 uM) and, to a lesser extent, against S.aureus but not against P.aeruginosa or E.coli. The sequence is that of Tau-AnmTx Ueq 12-1 from Urticina eques (Sea anemone).